Consider the following 164-residue polypeptide: Arginine repressor (164 aa).

The protein belongs to the ArgR family.

Its subcellular location is the cytoplasm. It participates in amino-acid biosynthesis; L-arginine biosynthesis [regulation]. Its function is as follows. Regulates arginine biosynthesis genes. The polypeptide is Arginine repressor (Mycolicibacterium paratuberculosis (strain ATCC BAA-968 / K-10) (Mycobacterium paratuberculosis)).